We begin with the raw amino-acid sequence, 1372 residues long: Serine protease pic autotransporter (1372 aa).

The N-terminal stretch at Met-1–Ala-55 is a signal peptide. The region spanning Gly-56–Gln-301 is the Peptidase S6 domain. Residues His-127, Asp-155, and Ser-258 each act as charge relay system in the active site. One can recognise an Autotransporter domain in the interval Asp-1106–Phe-1372.

Cleaved to release the mature protein from the outer membrane.

The protein localises to the periplasm. It is found in the secreted. Its subcellular location is the cell surface. The protein resides in the cell outer membrane. In terms of biological role, involved in intestinal colonization, displays in vitro mucinolytic activity, serum resistance, and hemagglutination. Important to penetrate the intestinal mucus layer. The chain is Serine protease pic autotransporter (pic) from Escherichia coli O44:H18 (strain 042 / EAEC).